Reading from the N-terminus, the 138-residue chain is Basic leucine zipper 8 (138 aa).

Positions Asn-30–Gln-67 are disordered. Residues Asp-37–Arg-47 are compositionally biased toward basic and acidic residues. The bZIP domain maps to Asn-45–Leu-108. The tract at residues Arg-47–Arg-68 is basic motif. A Nuclear localization signal motif is present at residues Lys-48–Asn-55. The tract at residues Leu-73–Leu-87 is leucine-zipper.

Belongs to the bZIP family. In terms of assembly, homodimer.

The protein localises to the nucleus. This Arabidopsis thaliana (Mouse-ear cress) protein is Basic leucine zipper 8.